Here is an 864-residue protein sequence, read N- to C-terminus: Leucine--tRNA ligase (864 aa).

The 'HIGH' region motif lies at 57-67; the sequence is PYPSGNLHMGH. The short motif at 628 to 632 is the 'KMSKS' region element; it reads KMSKS. Lys631 is a binding site for ATP.

Belongs to the class-I aminoacyl-tRNA synthetase family.

The protein resides in the cytoplasm. The catalysed reaction is tRNA(Leu) + L-leucine + ATP = L-leucyl-tRNA(Leu) + AMP + diphosphate. This chain is Leucine--tRNA ligase, found in Prochlorococcus marinus (strain MIT 9515).